The primary structure comprises 170 residues: Adenine phosphoribosyltransferase (170 aa).

Belongs to the purine/pyrimidine phosphoribosyltransferase family. In terms of assembly, homodimer.

It is found in the cytoplasm. The catalysed reaction is AMP + diphosphate = 5-phospho-alpha-D-ribose 1-diphosphate + adenine. It functions in the pathway purine metabolism; AMP biosynthesis via salvage pathway; AMP from adenine: step 1/1. Catalyzes a salvage reaction resulting in the formation of AMP, that is energically less costly than de novo synthesis. The sequence is that of Adenine phosphoribosyltransferase from Lactococcus lactis subsp. cremoris (strain SK11).